We begin with the raw amino-acid sequence, 37 residues long: Omega-sparatoxin-Hv1a (37 aa).

Disulfide bonds link Cys-4–Cys-18, Cys-11–Cys-23, and Cys-17–Cys-33.

In terms of tissue distribution, expressed by the venom gland.

Its subcellular location is the secreted. Blocks calcium channels (Cav). The sequence is that of Omega-sparatoxin-Hv1a from Heteropoda venatoria (Brown huntsman spider).